Reading from the N-terminus, the 282-residue chain is U1 small nuclear ribonucleoprotein A (282 aa).

Position 2 is an N-acetylalanine (A2). The RRM 1 domain occupies 10–89; that stretch reads HTIYINNLNE…KPMRIQYAKT (80 aa). Residue K60 is modified to N6-acetyllysine. Residues 100 to 132 form a disordered region; sequence TFVERDRKREKRKPKSQETPATKKAVQGGGATP. T131 is modified (phosphothreonine). R152 bears the Omega-N-methylarginine mark. Positions 208-282 constitute an RRM 2 domain; sequence HILFLTNLPE…NAMKISFAKK (75 aa).

This sequence belongs to the RRM U1 A/B'' family. In terms of assembly, U1 snRNP is composed of the 7 core Sm proteins SNRPB, SNRPD1, SNRPD2, SNRPD3, SNRPE, SNRPF and SNRPG that assemble in a heptameric protein ring on the Sm site of the small nuclear RNA to form the core snRNP, and at least three U1 snRNP-specific proteins SNRNP70/U1-70K, SNRPA/U1-A and SNRPC/U1-C. Interacts with SFPQ; component of a snRNP-free complex with SFPQ. Interacts with IVNS1ABP (via BACK domain); the interaction is indirect.

The protein resides in the nucleus. Its function is as follows. Component of the spliceosomal U1 snRNP, which is essential for recognition of the pre-mRNA 5' splice-site and the subsequent assembly of the spliceosome. U1 snRNP is the first snRNP to interact with pre-mRNA. This interaction is required for the subsequent binding of U2 snRNP and the U4/U6/U5 tri-snRNP. SNRPA binds stem loop II of U1 snRNA. In a snRNP-free form (SF-A) may be involved in coupled pre-mRNA splicing and polyadenylation process. May bind preferentially to the 5'-UGCAC-3' motif on RNAs. This Homo sapiens (Human) protein is U1 small nuclear ribonucleoprotein A (SNRPA).